A 258-amino-acid polypeptide reads, in one-letter code: Tryptophan synthase alpha chain (258 aa).

Active-site proton acceptor residues include E52 and D63.

This sequence belongs to the TrpA family. As to quaternary structure, tetramer of two alpha and two beta chains.

The enzyme catalyses (1S,2R)-1-C-(indol-3-yl)glycerol 3-phosphate + L-serine = D-glyceraldehyde 3-phosphate + L-tryptophan + H2O. It functions in the pathway amino-acid biosynthesis; L-tryptophan biosynthesis; L-tryptophan from chorismate: step 5/5. The alpha subunit is responsible for the aldol cleavage of indoleglycerol phosphate to indole and glyceraldehyde 3-phosphate. The chain is Tryptophan synthase alpha chain from Streptococcus pneumoniae (strain P1031).